The chain runs to 1010 residues: Retinoblastoma-related protein 1 (1010 aa).

The tract at residues 1 to 23 (MEGAAPPASSGSEVTGAGSGKVD) is disordered. The domain A stretch occupies residues 419-619 (TPVSTAMTTA…EKGSSMYNSL (201 aa)). The pocket stretch occupies residues 419-861 (TPVSTAMTTA…NEVFIPTVKP (443 aa)). Positions 620–730 (IVARPTLSAE…PAAGGELCAE (111 aa)) are spacer. Residues 657–679 (LPPLPFQKQEHSPDKDEVRSPKR) form a disordered region. Over residues 664–679 (KQEHSPDKDEVRSPKR) the composition is skewed to basic and acidic residues. The domain B stretch occupies residues 731 to 861 (TGIGVFLSKI…NEVFIPTVKP (131 aa)). The disordered stretch occupies residues 868–898 (SGTSPNKKNEEKCAADGPYPESPRLSRFPNL).

Belongs to the retinoblastoma protein (RB) family.

Its subcellular location is the nucleus. In terms of biological role, regulator of biological processes that recruits a histone deacetylase to control gene transcription. May play a role in the entry into mitosis, negatively regulating the cell proliferation. Formation of stable complexes with geminiviridae replication-associated proteins may create a cellular environment which favors viral DNA replication. This Oryza sativa subsp. indica (Rice) protein is Retinoblastoma-related protein 1 (RBR1).